Reading from the N-terminus, the 357-residue chain is Probable GTP 3',8-cyclase (357 aa).

The 230-residue stretch at 5–234 folds into the Radical SAM core domain; that stretch reads DFGRDVSGVR…DRRRYWVSSR (230 aa). Arginine 14 is a GTP binding site. Residues cysteine 21 and cysteine 25 each contribute to the [4Fe-4S] cluster site. Tyrosine 27 contacts S-adenosyl-L-methionine. Cysteine 28 is a [4Fe-4S] cluster binding site. Lysine 68 is a GTP binding site. Glycine 72 contacts S-adenosyl-L-methionine. Residue threonine 96 participates in GTP binding. Serine 120 lines the S-adenosyl-L-methionine pocket. Lysine 157 serves as a coordination point for GTP. Residues 232–256 are disordered; sequence SSRDAGSTADDAAQSVTPDGGAHPD. Residues cysteine 272 and cysteine 275 each coordinate [4Fe-4S] cluster. GTP is bound at residue 277–279; the sequence is RVR. A [4Fe-4S] cluster-binding site is contributed by cysteine 289.

This sequence belongs to the radical SAM superfamily. MoaA family. It depends on [4Fe-4S] cluster as a cofactor.

The catalysed reaction is GTP + AH2 + S-adenosyl-L-methionine = (8S)-3',8-cyclo-7,8-dihydroguanosine 5'-triphosphate + 5'-deoxyadenosine + L-methionine + A + H(+). It participates in cofactor biosynthesis; molybdopterin biosynthesis. Its function is as follows. Catalyzes the cyclization of GTP to (8S)-3',8-cyclo-7,8-dihydroguanosine 5'-triphosphate. This Halobacterium salinarum (strain ATCC 29341 / DSM 671 / R1) protein is Probable GTP 3',8-cyclase.